Reading from the N-terminus, the 179-residue chain is Cytochrome c-type biogenesis protein CcmE (179 aa).

Topologically, residues 1–8 are cytoplasmic; that stretch reads MNPRRKSR. The helical; Signal-anchor for type II membrane protein transmembrane segment at 9–29 threads the bilayer; that stretch reads LTIILFVLLGVTIASSLVLYA. Over 30 to 179 the chain is Periplasmic; the sequence is LRQNIDLFYT…AVNSVEEGKK (150 aa). The heme site is built by H131 and Y135. Composition is skewed to basic and acidic residues over residues 138–148 and 161–179; these read PDLSEKMEQVH and ESDR…EGKK. A disordered region spans residues 138–179; sequence PDLSEKMEQVHKPMGISNQDMQGESDRDRLDKAVNSVEEGKK.

It belongs to the CcmE/CycJ family.

It localises to the cell inner membrane. Its function is as follows. Heme chaperone required for the biogenesis of c-type cytochromes. Transiently binds heme delivered by CcmC and transfers the heme to apo-cytochromes in a process facilitated by CcmF and CcmH. The chain is Cytochrome c-type biogenesis protein CcmE from Mannheimia succiniciproducens (strain KCTC 0769BP / MBEL55E).